Here is a 196-residue protein sequence, read N- to C-terminus: MALVPIVVEQTSKGERSYDIYSRLLKERIIFLTGQVEDHMANLIVAQMLFLEAEDPEKDIYLYINSPGGVVTAGLAIYDTMNFIKPDVATLCTGQACSMGAFLLSGGAKGKRFALPNARVMIHQPLGGARGQATDIQIQAQEILKLKEMLTRKMAEHSGQPFEKVAADTERDNFMSAVEAMEYGLIDKVLTHRDIK.

The active-site Nucleophile is the S98. The active site involves H123.

Belongs to the peptidase S14 family. As to quaternary structure, fourteen ClpP subunits assemble into 2 heptameric rings which stack back to back to give a disk-like structure with a central cavity, resembling the structure of eukaryotic proteasomes.

The protein resides in the cytoplasm. The catalysed reaction is Hydrolysis of proteins to small peptides in the presence of ATP and magnesium. alpha-casein is the usual test substrate. In the absence of ATP, only oligopeptides shorter than five residues are hydrolyzed (such as succinyl-Leu-Tyr-|-NHMec, and Leu-Tyr-Leu-|-Tyr-Trp, in which cleavage of the -Tyr-|-Leu- and -Tyr-|-Trp bonds also occurs).. Its function is as follows. Cleaves peptides in various proteins in a process that requires ATP hydrolysis. Has a chymotrypsin-like activity. Plays a major role in the degradation of misfolded proteins. In Actinobacillus pleuropneumoniae serotype 7 (strain AP76), this protein is ATP-dependent Clp protease proteolytic subunit.